We begin with the raw amino-acid sequence, 376 residues long: Zinc finger CCCH domain-containing protein C337.12 (376 aa).

The stretch at Asn-2 to Glu-25 forms a coiled coil. The interval Ser-60–Ser-95 is disordered. Over residues Asp-80 to Ser-89 the composition is skewed to basic and acidic residues. Residues Lys-105–Gln-140 adopt a coiled-coil conformation. 4 consecutive C3H1-type zinc fingers follow at residues Ser-202–Glu-228, Pro-229–Asp-256, Pro-257–Tyr-283, and Ser-284–Gln-312. Positions Ser-347–Val-376 are disordered. The segment covering Thr-349–Ser-369 has biased composition (polar residues).

Its subcellular location is the nucleus. This chain is Zinc finger CCCH domain-containing protein C337.12, found in Schizosaccharomyces pombe (strain 972 / ATCC 24843) (Fission yeast).